We begin with the raw amino-acid sequence, 524 residues long: Strychnine-10-hydroxylase (524 aa).

The helical transmembrane segment at 6 to 26 threads the bilayer; that stretch reads LYIHTAILGLISLFLILHFVF. C466 contacts heme.

The protein belongs to the cytochrome P450 family. The cofactor is heme.

It localises to the membrane. The catalysed reaction is strychnine + reduced [NADPH--hemoprotein reductase] + O2 = 10-hydroxystrychnine + oxidized [NADPH--hemoprotein reductase] + H2O + H(+). It participates in alkaloid biosynthesis. In terms of biological role, monooxygenase involved in the biosynthesis of curare monoterpene indole alkaloids (MIAs), natural products such as strychnine, a neurotoxic compound used as a pesticide to control rodents, and its pharmacologically active derivatives, including brucine, used to regulate blood pressure. Curare alkaloids act as animal glycine receptor antagonists. Catalyzes the conversion of strychnine to 10-OH strychnine. The protein is Strychnine-10-hydroxylase of Strychnos nux-vomica (Poison nut).